An 882-amino-acid chain; its full sequence is Serine/threonine-protein kinase greatwall (882 aa).

The residue at position 1 (methionine 1) is an N-acetylmethionine. In terms of domain architecture, Protein kinase spans 35-838; it reads FTIVKPISRG…MKELKRHHLF (804 aa). Residues 41 to 49 and lysine 62 each bind ATP; that span reads ISRGAFGKV. The Proton acceptor role is filled by aspartate 156. Residues threonine 207 and threonine 222 each carry the phosphothreonine modification. A phosphoserine mark is found at serine 293, serine 371, and serine 454. Residue threonine 521 is modified to Phosphothreonine. Phosphoserine occurs at positions 554, 558, 633, 660, and 671. The segment at 713 to 736 is disordered; that stretch reads TPNQVKSGTPYRTPKSVRRGAAPV. Position 725 is a phosphothreonine (threonine 725). Serine 728 is subject to Phosphoserine. Threonine 744 carries the post-translational modification Phosphothreonine; by CDK1. Positions 839 to 882 constitute an AGC-kinase C-terminal domain; that stretch reads SDVDWENLQHQTMPFIPQPDDETDTSYFEARNNAQHLTISGFSL. A phosphoserine mark is found at serine 878 and serine 881.

The protein belongs to the protein kinase superfamily. AGC Ser/Thr protein kinase family. Phosphorylation at Thr-744 by CDK1 during M phase activates its kinase activity. Maximum phosphorylation occurs in prometaphase.

The protein resides in the cytoplasm. It localises to the cytoskeleton. It is found in the microtubule organizing center. The protein localises to the centrosome. Its subcellular location is the nucleus. The enzyme catalyses L-seryl-[protein] + ATP = O-phospho-L-seryl-[protein] + ADP + H(+). It catalyses the reaction L-threonyl-[protein] + ATP = O-phospho-L-threonyl-[protein] + ADP + H(+). Its function is as follows. Serine/threonine kinase that plays a key role in M phase by acting as a regulator of mitosis entry and maintenance. Acts by promoting the inactivation of protein phosphatase 2A (PP2A) during M phase: does not directly inhibit PP2A but acts by mediating phosphorylation and subsequent activation of ARPP19 and ENSA at 'Ser-62' and 'Ser-67', respectively. ARPP19 and ENSA are phosphatase inhibitors that specifically inhibit the PPP2R2D (PR55-delta) subunit of PP2A. Inactivation of PP2A during M phase is essential to keep cyclin-B1-CDK1 activity high. Following DNA damage, it is also involved in checkpoint recovery by being inhibited. In Ailuropoda melanoleuca (Giant panda), this protein is Serine/threonine-protein kinase greatwall (MASTL).